A 96-amino-acid chain; its full sequence is Small cysteine and glycine repeat-containing protein 7 (96 aa).

A 14 X 2 AA repeats of CG region spans residues 4–80 (CGCGSCGGCG…TCGSCGCGCG (77 aa)).

This sequence belongs to the KRTAP type 28 family.

In the hair cortex, hair keratin intermediate filaments are embedded in an interfilamentous matrix, consisting of hair keratin-associated proteins (KRTAP), which are essential for the formation of a rigid and resistant hair shaft through their extensive disulfide bond cross-linking with abundant cysteine residues of hair keratins. The matrix proteins include the high-sulfur and high-glycine-tyrosine keratins. The polypeptide is Small cysteine and glycine repeat-containing protein 7 (Homo sapiens (Human)).